A 122-amino-acid chain; its full sequence is Large ribosomal subunit protein uL14 (122 aa).

Belongs to the universal ribosomal protein uL14 family. As to quaternary structure, part of the 50S ribosomal subunit. Forms a cluster with proteins L3 and L19. In the 70S ribosome, L14 and L19 interact and together make contacts with the 16S rRNA in bridges B5 and B8.

Its function is as follows. Binds to 23S rRNA. Forms part of two intersubunit bridges in the 70S ribosome. The polypeptide is Large ribosomal subunit protein uL14 (Verminephrobacter eiseniae (strain EF01-2)).